The following is a 288-amino-acid chain: Short chain aldehyde dehydrogenase 1 (288 aa).

Residues 26–28 (SGI), Asp47, 72–73 (DV), and 99–101 (NAG) each bind NAD(+). Catalysis depends on Ser153, which acts as the Proton donor. Substrate-binding residues include Ser153 and Tyr166. Residues Tyr166, Lys170, and Thr201 each contribute to the NAD(+) site. Tyr166 acts as the Proton acceptor in catalysis. Catalysis depends on Lys170, which acts as the Proton donor/acceptor.

The protein belongs to the short-chain dehydrogenases/reductases (SDR) family. As to quaternary structure, homodimer. As to expression, expressed in mature seeds.

It catalyses the reaction 4,5,8-trihydroxycasbene + 2 NAD(+) = jolkinol C + 2 NADH + 2 H(+). The catalysed reaction is a secondary alcohol + NAD(+) = a ketone + NADH + H(+). It carries out the reaction a primary alcohol + NAD(+) = an aldehyde + NADH + H(+). Its pathway is secondary metabolite biosynthesis; terpenoid biosynthesis. Its function is as follows. Involved in the biosynthesis of macrocyclic lathyrane type diterpenoids (also called Euphorbia factors) natural products, including the cyclization route from casbene to jolkinol C, a precursor for ingenol mebutate that is used to treat actinic keratosis, a precancerous skin condition. Catalyzes the conversion of 4,5,8-trihydroxycasbene into jolkinol C in presence of NAD. Also mediates the formation of casbene dione derivative and 4-ketocasbene from 4-hydroxy-8-ketocasbene and 4-hydroxycasbene, respectively. Together with CYP71D445, triggers the biosynthesis of 8-ketocasbene from 8-hydroxycasbene. In Euphorbia lathyris (Caper spurge), this protein is Short chain aldehyde dehydrogenase 1.